A 190-amino-acid polypeptide reads, in one-letter code: DNA dC-&gt;dU-editing enzyme APOBEC-3C (190 aa).

The CMP/dCMP-type deaminase domain maps to 29-138; the sequence is DRNETWLCFT…PCYQEGLRSL (110 aa). The (Microbial infection) Required for interaction with human foamy virus protein Bet stretch occupies residues 40–86; the sequence is EGIKRRSVVSWKTGVFRNQVDSETHCHAERCFLSWFCDDILSPNTKY. Position 66 (His66) interacts with Zn(2+). Glu68 (proton donor) is an active-site residue. Zn(2+) is bound by residues Cys97 and Cys100.

The protein belongs to the cytidine and deoxycytidylate deaminase family. In terms of assembly, homodimer. Interacts with TRIB3. Interacts with AGO2. As to quaternary structure, (Microbial infection) Interacts with human foamy virus protein Bet; this interaction does not induce APOBEC3C degradation but prevents its dimerization and incorporation into the virion by binding of Bet close to or within the APOBEC3C dimerization site. (Microbial infection) Interacts with HIV-1 Vif. It depends on Zn(2+) as a cofactor. In terms of tissue distribution, expressed in spleen, testes, peripherical blood lymphocytes, heart, thymus, prostate and ovary.

Its subcellular location is the nucleus. The protein localises to the cytoplasm. It catalyses the reaction a 2'-deoxycytidine in single-stranded DNA + H2O + H(+) = a 2'-deoxyuridine in single-stranded DNA + NH4(+). (Microbial infection) Antiviral activity is neutralized by the HIV-1 virion infectivity factor (Vif), that prevents its incorporation into progeny HIV-1 virions by both inhibiting its translation and/or by inducing its ubiquitination and subsequent degradation by the 26S proteasome. DNA deaminase (cytidine deaminase) which acts as an inhibitor of retrovirus replication and retrotransposon mobility via deaminase-dependent and -independent mechanisms. After the penetration of retroviral nucleocapsids into target cells of infection and the initiation of reverse transcription, it can induce the conversion of cytosine to uracil in the minus-sense single-strand viral DNA, leading to G-to-A hypermutations in the subsequent plus-strand viral DNA. The resultant detrimental levels of mutations in the proviral genome, along with a deamination-independent mechanism that works prior to the proviral integration, together exert efficient antiretroviral effects in infected target cells. Selectively targets single-stranded DNA and does not deaminate double-stranded DNA or single- or double-stranded RNA. Exhibits antiviral activity against simian immunodeficiency virus (SIV), hepatitis B virus (HBV), herpes simplex virus 1 (HHV-1) and Epstein-Barr virus (EBV) and may inhibit the mobility of LTR and non-LTR retrotransposons. May also play a role in the epigenetic regulation of gene expression through the process of active DNA demethylation. The polypeptide is DNA dC-&gt;dU-editing enzyme APOBEC-3C (APOBEC3C) (Homo sapiens (Human)).